A 396-amino-acid chain; its full sequence is ATP-dependent RNA helicase eIF4A (396 aa).

The short motif at 22–50 (YSFDDLNLKPNIVRGIFGYGYESPSAIQQ) is the Q motif element. The 171-residue stretch at 53–223 (ILPITEGRDV…TKFMNNPVRI (171 aa)) folds into the Helicase ATP-binding domain. 66-73 (AQSGTGKT) is an ATP binding site. The DEAD box motif lies at 171–174 (DEAD). In terms of domain architecture, Helicase C-terminal spans 234 to 395 (GIKQFYINVE…EMPANIGELF (162 aa)).

This sequence belongs to the DEAD box helicase family. eIF4A subfamily. Component of the eIF4F complex, which composition varies with external and internal environmental conditions. It is composed of at least eIF4A, eIF4E and eIF4G.

It localises to the cytoplasm. The enzyme catalyses ATP + H2O = ADP + phosphate + H(+). In terms of biological role, ATP-dependent RNA helicase which is a subunit of the eIF4F complex involved in cap recognition and is required for mRNA binding to ribosome. In the current model of translation initiation, eIF4A unwinds RNA secondary structures in the 5'-UTR of mRNAs which is necessary to allow efficient binding of the small ribosomal subunit, and subsequent scanning for the initiator codon. This Meyerozyma guilliermondii (strain ATCC 6260 / CBS 566 / DSM 6381 / JCM 1539 / NBRC 10279 / NRRL Y-324) (Yeast) protein is ATP-dependent RNA helicase eIF4A (TIF1).